Reading from the N-terminus, the 209-residue chain is ATP-dependent Clp protease proteolytic subunit (209 aa).

The active-site Nucleophile is the serine 106. The active site involves histidine 131.

It belongs to the peptidase S14 family. In terms of assembly, fourteen ClpP subunits assemble into 2 heptameric rings which stack back to back to give a disk-like structure with a central cavity, resembling the structure of eukaryotic proteasomes.

It is found in the cytoplasm. The enzyme catalyses Hydrolysis of proteins to small peptides in the presence of ATP and magnesium. alpha-casein is the usual test substrate. In the absence of ATP, only oligopeptides shorter than five residues are hydrolyzed (such as succinyl-Leu-Tyr-|-NHMec, and Leu-Tyr-Leu-|-Tyr-Trp, in which cleavage of the -Tyr-|-Leu- and -Tyr-|-Trp bonds also occurs).. Its function is as follows. Cleaves peptides in various proteins in a process that requires ATP hydrolysis. Has a chymotrypsin-like activity. Plays a major role in the degradation of misfolded proteins. This is ATP-dependent Clp protease proteolytic subunit from Brucella canis (strain ATCC 23365 / NCTC 10854 / RM-666).